A 326-amino-acid chain; its full sequence is Pyruvate dehydrogenase E1 component subunit alpha (326 aa).

As to quaternary structure, heterodimer of an alpha and a beta chain. Thiamine diphosphate serves as cofactor.

The enzyme catalyses N(6)-[(R)-lipoyl]-L-lysyl-[protein] + pyruvate + H(+) = N(6)-[(R)-S(8)-acetyldihydrolipoyl]-L-lysyl-[protein] + CO2. In terms of biological role, the pyruvate dehydrogenase complex catalyzes the overall conversion of pyruvate to acetyl-CoA and CO(2). It contains multiple copies of three enzymatic components: pyruvate dehydrogenase (E1), dihydrolipoamide acetyltransferase (E2) and lipoamide dehydrogenase (E3). The sequence is that of Pyruvate dehydrogenase E1 component subunit alpha (pdhA) from Rickettsia felis (strain ATCC VR-1525 / URRWXCal2) (Rickettsia azadi).